The following is a 206-amino-acid chain: Guanylate kinase (206 aa).

The Guanylate kinase-like domain occupies Gly-6–Arg-184. Ala-13–Ser-20 contributes to the ATP binding site.

The protein belongs to the guanylate kinase family.

The protein resides in the cytoplasm. It catalyses the reaction GMP + ATP = GDP + ADP. Functionally, essential for recycling GMP and indirectly, cGMP. This is Guanylate kinase from Pseudomonas fluorescens (strain ATCC BAA-477 / NRRL B-23932 / Pf-5).